A 115-amino-acid polypeptide reads, in one-letter code: U3-lycotoxin-Ls1k (115 aa).

A signal peptide spans 1 to 20; sequence MKFVLLFGVLLVALFSYSSA. Residues 21-44 constitute a propeptide that is removed on maturation; it reads EMLDDFGQADEDELLSLIEKEEAR. Intrachain disulfides connect C48/C63, C55/C72, C62/C87, and C74/C85.

The protein belongs to the neurotoxin 19 (CSTX) family. 01 subfamily. Expressed by the venom gland.

Its subcellular location is the secreted. The polypeptide is U3-lycotoxin-Ls1k (Lycosa singoriensis (Wolf spider)).